A 306-amino-acid polypeptide reads, in one-letter code: 3-methyl-2-oxobutanoate hydroxymethyltransferase (306 aa).

Positions 53 and 96 each coordinate Mg(2+). 3-methyl-2-oxobutanoate-binding positions include 53–54, Asp96, and Lys126; that span reads DS. Glu128 is a binding site for Mg(2+). Residue Glu195 is the Proton acceptor of the active site.

This sequence belongs to the PanB family. In terms of assembly, homodecamer; pentamer of dimers. It depends on Mg(2+) as a cofactor.

It localises to the cytoplasm. It carries out the reaction 3-methyl-2-oxobutanoate + (6R)-5,10-methylene-5,6,7,8-tetrahydrofolate + H2O = 2-dehydropantoate + (6S)-5,6,7,8-tetrahydrofolate. The protein operates within cofactor biosynthesis; (R)-pantothenate biosynthesis; (R)-pantoate from 3-methyl-2-oxobutanoate: step 1/2. In terms of biological role, catalyzes the reversible reaction in which hydroxymethyl group from 5,10-methylenetetrahydrofolate is transferred onto alpha-ketoisovalerate to form ketopantoate. The polypeptide is 3-methyl-2-oxobutanoate hydroxymethyltransferase (Anaeromyxobacter sp. (strain K)).